The following is a 400-amino-acid chain: Elongation factor Tu (400 aa).

The region spanning 10–210 (KPHVNVGTIG…ALDSYIPEPV (201 aa)) is the tr-type G domain. Residues 19 to 26 (GHVDHGKT) form a G1 region. Residue 19–26 (GHVDHGKT) participates in GTP binding. Thr26 is a Mg(2+) binding site. Residues 66–70 (ILTIA) form a G2 region. The interval 87-90 (DCPG) is G3. Residues 87–91 (DCPGH) and 142–145 (NKCD) each bind GTP. The segment at 142–145 (NKCD) is G4. The G5 stretch occupies residues 180–182 (SAI).

The protein belongs to the TRAFAC class translation factor GTPase superfamily. Classic translation factor GTPase family. EF-Tu/EF-1A subfamily. Monomer.

It localises to the cytoplasm. It carries out the reaction GTP + H2O = GDP + phosphate + H(+). GTP hydrolase that promotes the GTP-dependent binding of aminoacyl-tRNA to the A-site of ribosomes during protein biosynthesis. The protein is Elongation factor Tu of Gemmatimonas aurantiaca (strain DSM 14586 / JCM 11422 / NBRC 100505 / T-27).